We begin with the raw amino-acid sequence, 632 residues long: MQTYNAGTFDVIVVGAGHAGVEAGLASGRMGAKTLMLTINLDMVAFMPCNPSVGGPAKGVVVREIDALGGEMGRNTDKTYIQMRMLNTGKGPAVRALRAQADKWDYQHEMKHTIEKEENITLRQGLVDRLVIEDGVCKGVITNSGAIYYAKTVVITTGTFSRGEIIVGELRYSSGPNNQQPSVKLSEHLEELGFELRRFKTGTPPRVKSSTIDYSKTEEQPGDDHPRAFSFDTVEMLLDQLPCWLTYTNETTHEIIQANLHRSPMFTATKKGTGARYCPSIEDKIVRFSDKPRHQIFLEPEGKNTEEVYVQGLSTSLPEEVQREMLRTIPGLENVEMMRVGYAIEYDAVMPDQLWPSLETKLVEGLFTAGQINGTSGYEEAAGQGLMAGINAARKVFAKEPVILGRDQAYIGVLIDDLVTKGTEEPYRLLTSRAEYRLLLRHDNADLRLTEIGHEIGLISDERYERFLAKQSAIEAEKERLQKTRIKPTAEVQAMLKEIGSGELKDGILAADLLRRPEITYDKIAQIVSRETFVTDEIAEQVEIQIKYEGYIQKSNLQVEKMKRMEDKKIPENIDYDAISGLATEALEKLKKIEPLSIAQASRISGVNPADISILLVYIEQGKIAKRDKEKA.

FAD contacts are provided by residues 15–20 (GAGHAG), valine 127, and serine 182. The disordered stretch occupies residues 203–226 (TPPRVKSSTIDYSKTEEQPGDDHP). Positions 215–226 (SKTEEQPGDDHP) are enriched in basic and acidic residues. 274 to 288 (GARYCPSIEDKIVRF) contributes to the NAD(+) binding site. Residue glutamine 371 coordinates FAD.

This sequence belongs to the MnmG family. As to quaternary structure, homodimer. Heterotetramer of two MnmE and two MnmG subunits. The cofactor is FAD.

It is found in the cytoplasm. In terms of biological role, NAD-binding protein involved in the addition of a carboxymethylaminomethyl (cmnm) group at the wobble position (U34) of certain tRNAs, forming tRNA-cmnm(5)s(2)U34. The polypeptide is tRNA uridine 5-carboxymethylaminomethyl modification enzyme MnmG (Listeria monocytogenes serotype 4b (strain F2365)).